The chain runs to 1679 residues: MRSMNCTTNNTNNTGQNTKNSLGSSFNSSNYTSYRFQTCLTDQIISEAQTWSLSSLFNFSWVVSYFVMGASRMIFRYGWYLATLSLLRIPKWIFFKLHHVQFTLSFWLILFALAVIVFVTYTIMKERILSQYKRLTPEFLPLENTGKSGSSANINAASTQSANAPPAIGSSTTGASSIIDSKKHSLKDGNENETFLSSYLDQFLSAIKIFGYLEKPVFHDLTKNMKTQKMDEGEILLLDSTIGFAIVVEGTLQLYHEVDHSDKDHGDETDHSDTDGLDDQDRDEEDEEEDDDIDNYDTKSCSSNLIDEEDESVGYIHLKNGLGNFQLLNTVKPGNPLTSLVSILNLFTHSMSSYGNSNFPSELSSPIDTTVSVNNMFCSSEQNFSNTDSMTNSTNSFPTFPSSMPKLVARAATDCTIGIIPPQSFAKLTAKYPRSASHIIQMVLTKLYHVTFQTAHDYLGLTKEIMDIEVLLNKSIVYELPYYLKEAVIRKFKTVDKSSGSADLEPKPKNSNASSKLKKPPKAKPSDGIIQSLKIANANANTSSNSLSLKPEFTHHPSSRHVVLGSRDQFNPGDLLSNVPLSRTMDILSPNPIHNNNRNKSNGINTSTSNQHKRSSRSSSNNASVHSKKFSSLSPELRNAQLSTSPLSLDNTSVHDHIHPSPVHLKGRVSPRPNLLPTTSFSAAQEETEDSALRMALVEAMLTYLGVNKSNMSVSSSSIANMSSLNSPQLNEMYSRRPSNASFLMSPHCTPSDISVASSFASPQTQPTMLRILPKEYTISNKRHNKSKSQDKKKPRAYKEELTPNLDFEDVKKDFAQGIQLKFFKKGTTIVEQNARGKGLFYIISGKVNVTTNSSSSVVSSMSKPEQVSAQSSHKGENPHHTQHLLYSVGSGGIVGYLSSLIGYKSFVNIVAKSDVYVGFLSSATLERLFDKYFLIYLRISDSLTKLLSSRLLKLDHALEWVHLRASETLFSQGDSANGIYVVLNGRLRQLQQQSLSNSNTSSEEVETQNIILGELAQGESFGEVEVLTAMNRYSTIVAVRDSELARIPRTLFELLALEHPSIMIRVSRLVAKKIVGDRTVPALTGDPLSIKENDFTSLIPPTKASYSSSLSHKPQNITSGTITFRTITILPITSGLPVEAFAMKLVQAFKQVGRTTIGLNQRTTLTHLGRHAFDRLSKLKQSGYFAELEEMYQTVVYISDTPVKSNWTRTCIAQGDCILLLADARSPSAEIGEYEKLLLNSKTTARTELILLHPERYVEPGLTHKWLRYRPWVHSHHHIQFSLTGTTLMNEGKMHVLNNGALALMDKLIQTEFSRKTQQNISKLLPDSIKNTVENFSSRFMKSKRQYYTPVHRHKNDFLRLARILSGQAIGLVLGGGGARGISHLGVIQAIEEQGIPVDVIGGTSIGSFVGGLYAKDYDLVPIYGRVKKFAGRISSIWRMLTDLTWPVTSYTTGHEFNRGIWKTFGDTRIEDFWIQYYCNSTNITDSVQEIHSFGYAWRYIRASMSLAGLLPPLEENGSMLLDGGYVDNLPVTEMRARGCQTIFAVDVGSADDRTPMEYGDSLNGFWIIFNRWNPFSSHPNIPNMAEIQVRLGYVASVNALEKAKNTPGVVYVRPPIEEYATLDFSKFEEIYHVGVDYGRIFLQGLIDDDKMPYIPGSQETTLNSQVPEFLLHRRNSI.

The segment covering 1-20 (MRSMNCTTNNTNNTGQNTKN) has biased composition (low complexity). The disordered stretch occupies residues 1 to 21 (MRSMNCTTNNTNNTGQNTKNS). The Cytoplasmic segment spans residues 1 to 49 (MRSMNCTTNNTNNTGQNTKNSLGSSFNSSNYTSYRFQTCLTDQIISEAQ). The chain crosses the membrane as a helical span at residues 50–70 (TWSLSSLFNFSWVVSYFVMGA). The Lumenal segment spans residues 71–103 (SRMIFRYGWYLATLSLLRIPKWIFFKLHHVQFT). A helical membrane pass occupies residues 104–124 (LSFWLILFALAVIVFVTYTIM). Over 125 to 1679 (KERILSQYKR…EFLLHRRNSI (1555 aa)) the chain is Cytoplasmic. The segment covering 261–274 (SDKDHGDETDHSDT) has biased composition (basic and acidic residues). A disordered region spans residues 261–304 (SDKDHGDETDHSDTDGLDDQDRDEEDEEEDDDIDNYDTKSCSSN). Residues 275–295 (DGLDDQDRDEEDEEEDDDIDN) show a composition bias toward acidic residues. Residues Ser300 and Ser312 each carry the phosphoserine modification. Disordered regions lie at residues 498–527 (SSGS…KPSD) and 586–672 (DILS…VSPR). 2 stretches are compositionally biased toward polar residues: residues 592–606 (PIHN…GINT) and 630–652 (FSSL…LDNT). Phosphoserine occurs at positions 632, 634, 653, 661, 670, 680, and 739. Residues 775–800 (KEYTISNKRHNKSKSQDKKKPRAYKE) are disordered. Residues 788–800 (KSQDKKKPRAYKE) show a composition bias toward basic and acidic residues. A Phosphothreonine modification is found at Thr803. A nucleoside 3',5'-cyclic phosphate contacts are provided by residues 803–947 (TPNL…LTKL) and 943–1074 (SLTK…VAKK). The interval 855-882 (SSSVVSSMSKPEQVSAQSSHKGENPHHT) is disordered. Residues 862-873 (MSKPEQVSAQSS) are compositionally biased toward polar residues. Residues 1373–1537 (LVLGGGGARG…VDNLPVTEMR (165 aa)) enclose the PNPLA domain. The short motif at 1377 to 1382 (GGGARG) is the GXGXXG element. The short motif at 1404–1408 (GTSIG) is the GXSXG element. The Nucleophile role is filled by Ser1406. Asp1524 serves as the catalytic Proton acceptor. The short motif at 1524-1526 (DGG) is the DGA/G element.

This sequence belongs to the NTE family.

The protein resides in the endoplasmic reticulum membrane. The protein localises to the lipid droplet. It carries out the reaction a 1-acyl-sn-glycero-3-phosphocholine + H2O = sn-glycerol 3-phosphocholine + a fatty acid + H(+). The enzyme catalyses a 1,2-diacyl-sn-glycero-3-phosphocholine + 2 H2O = sn-glycerol 3-phosphocholine + 2 a carboxylate + 2 H(+). Positively regulated by SEC14. Inhibited by organophosphorus esters in the order phenyl saligenin phosphate (PSP) &gt; phenyldipentyl phosphinate (PDPP) = diisopropyl fluorophosphate (DFP) &gt; and paraoxon (PXN). Functionally, intracellular phospholipase B that catalyzes the double deacylation of phosphatidylcholine (PC) to glycerophosphocholine (GroPCho). Plays an important role in membrane lipid homeostasis. Responsible for the rapid PC turnover in response to inositol, elevated temperatures, or when choline is present in the growth medium. NTE1 activity impacts the repressing transcriptional activity of OPI1, the main regulator of phospholipid synthesis gene transcription. This is Lysophospholipase NTE1 (NTE1) from Saccharomyces cerevisiae (strain ATCC 204508 / S288c) (Baker's yeast).